Consider the following 727-residue polypeptide: Catalase-peroxidase (727 aa).

The interval 1 to 24 (MDQKSDSAGKCPVAHTAPRGRSNR) is disordered. The segment at residues 95–217 (WHSAGTYRIT…LAAVQMGLIY (123 aa)) is a cross-link (tryptophyl-tyrosyl-methioninium (Trp-Tyr) (with M-243)). His96 serves as the catalytic Proton acceptor. A cross-link (tryptophyl-tyrosyl-methioninium (Tyr-Met) (with W-95)) is located at residues 217 to 243 (YVNPEGPNGNPDPVAAARDIRETFARM). His258 contacts heme b.

It belongs to the peroxidase family. Peroxidase/catalase subfamily. As to quaternary structure, homodimer or homotetramer. Requires heme b as cofactor. Post-translationally, formation of the three residue Trp-Tyr-Met cross-link is important for the catalase, but not the peroxidase activity of the enzyme.

The catalysed reaction is H2O2 + AH2 = A + 2 H2O. It catalyses the reaction 2 H2O2 = O2 + 2 H2O. Bifunctional enzyme with both catalase and broad-spectrum peroxidase activity. The protein is Catalase-peroxidase of Rhizobium meliloti (strain 1021) (Ensifer meliloti).